The chain runs to 156 residues: Translationally controlled tumor protein 2 (156 aa).

Residues 1–156 form the TCTP domain; sequence MLVYQDILTG…LAYGLKEIKC (156 aa).

It belongs to the TCTP family. Expressed in stems, cauline leaves, minor veins of rosette leaves, roots, lateral root primordia, vascular tissues of petioles and inflorescences, base of siliques, papillae and ovules. Not detected in root meristems, anthers or seeds. Expressed in stomata, trichomes and root cortex.

The protein resides in the nucleus. It is found in the cytoplasm. Regulates proliferation. Induces whole plant regeneration when expressed in heterologous systems. Involved in root growth and lateral root development, with a probable role in cell reprogramming. The long-distance transport of TCTP RNA and/or protein in plants may have an important role in regulation of growth and development. This chain is Translationally controlled tumor protein 2, found in Arabidopsis thaliana (Mouse-ear cress).